A 1507-amino-acid chain; its full sequence is Histone-lysine N-methyltransferase set-2 (1507 aa).

The segment at 1–32 (MSTHDMNHHPPRKSHSKRDKPSSSNSGPKIEN) is disordered. Over residues 9 to 18 (HPPRKSHSKR) the composition is skewed to basic residues. An RRM domain is found at 128–199 (VSLFNMDDNC…QNLLATKCTP (72 aa)). 5 disordered regions span residues 280–578 (DYTM…QPQM), 650–697 (EPFS…EEPA), 803–826 (DEEK…SNHL), 842–1058 (SSRG…GPII), and 1163–1199 (QKPR…FKPR). Residues 296-315 (PIPPPPIKEESPPPPPPPPV) show a composition bias toward pro residues. Residues 316–327 (ASVSNLAPVPSV) are compositionally biased toward low complexity. The span at 331-342 (YYNNIQPSSSTM) shows a compositional bias: polar residues. The segment covering 413 to 444 (VKYETYKMEKRKIKYEGGNKKYEQVHIKERTA) has biased composition (basic and acidic residues). Residues 456 to 465 (SSESASGSSS) are compositionally biased toward low complexity. Residues 478-488 (KKKKRPKSPNR) are compositionally biased toward basic residues. Residues 566-575 (HLQTPYQHVQ) are compositionally biased toward polar residues. 2 stretches are compositionally biased toward basic and acidic residues: residues 668-680 (DVGR…KPSL) and 803-823 (DEEK…EKPS). The segment covering 846 to 868 (FYRKQKPIPKSHPKHQEHHHHAK) has biased composition (basic residues). Over residues 869 to 908 (ASVSTPVHSSSTSRNSSVAPTPQRTVSTSSSSSSAATSAR) the composition is skewed to low complexity. Polar residues predominate over residues 941 to 951 (SFSSTSIQSSP). The span at 958-971 (SSSSRTSSSSSTSS) shows a compositional bias: low complexity. Residues 973 to 982 (KQEETADEKS) are compositionally biased toward basic and acidic residues. Residues 990–1007 (SSDESSTTGSTATSVVSS) are compositionally biased toward low complexity. Basic and acidic residues predominate over residues 1015–1047 (QQEKTDGEPPKKKSQTDFISERVSKIEGEERPL). The span at 1179–1190 (EPPPTKRPAPPP) shows a compositional bias: pro residues. Positions 1340–1345 (RLLQRR) match the RxxxRR motif motif. The 118-residue stretch at 1368–1485 (KMIKFARSRI…KGEEITYDYK (118 aa)) folds into the SET domain. An S-adenosyl-L-methionine-binding site is contributed by Tyr-1484. Positions 1491–1507 (DKIDCLCGAKTCRGYLN) constitute a Post-SET domain.

This sequence belongs to the class V-like SAM-binding methyltransferase superfamily. Component of the Set1C/COMPASS complex (also known as the SET2 complex), which contains at least set-2, swd-2.1, cfp-1, rbbp-5, wdr-5.1, dpy-30 and ash-2. In terms of tissue distribution, expressed in all cells of embryo. In L1 larva, it is predominantly expressed in Z2 and Z3 primordial germ cells. In adults, it is predominantly expressed in the germline.

Its subcellular location is the nucleus. It catalyses the reaction L-lysyl(4)-[histone H3] + 3 S-adenosyl-L-methionine = N(6),N(6),N(6)-trimethyl-L-lysyl(4)-[histone H3] + 3 S-adenosyl-L-homocysteine + 3 H(+). The catalysed reaction is N(6)-methyl-L-lysyl(4)-[histone H3] + S-adenosyl-L-methionine = N(6),N(6)-dimethyl-L-lysyl(4)-[histone H3] + S-adenosyl-L-homocysteine + H(+). It carries out the reaction N(6),N(6)-dimethyl-L-lysyl(4)-[histone H3] + S-adenosyl-L-methionine = N(6),N(6),N(6)-trimethyl-L-lysyl(4)-[histone H3] + S-adenosyl-L-homocysteine + H(+). In terms of biological role, catalytic component of the COMPASS (Set1C) complex that specifically mono-, di- and trimethylates histone H3 to form H3K4me1/2/3. Binds RNAs which might negatively affect its histone methyltransferase activity. COMPASS recognizes ubiquitinated H2B on one face of the nucleosome which stimulates the methylation of H3 on the opposing face. H3 'Lys-4' methylation represents a specific tag for epigenetic transcriptional activation. Implicated in the epigenetic inheritance of lifespan over several generations. Acts in the germline to limit the longevity of the soma, probably by regulating a lipid metabolism pathway that signals from the germline to the intestine, thereby preventing accumulation of mono-unsaturated fatty acids. Methylation in the germline is required for germline development and fertility, possibly by ensuring genome stability. May act redundantly with mes-3 and mes-4 proteins in the development of a fertile germline. Required for RNAi. Functions as an antagonist of hpl-1 and hpl-2 activity in growth and somatic gonad development. Cooperates with jmjd-3.1 and egl-27 to ensure robust transdifferentiation of the Y rectal cell to the PDA motor neuron during larval development. The protein is Histone-lysine N-methyltransferase set-2 (set-2) of Caenorhabditis elegans.